Reading from the N-terminus, the 89-residue chain is Signal recognition particle 19 kDa protein (89 aa).

Belongs to the SRP19 family. In terms of assembly, part of the signal recognition particle protein translocation system, which is composed of SRP and FtsY. Archaeal SRP consists of a 7S RNA molecule of 300 nucleotides and two protein subunits: SRP54 and SRP19.

Its subcellular location is the cytoplasm. Involved in targeting and insertion of nascent membrane proteins into the cytoplasmic membrane. Binds directly to 7S RNA and mediates binding of the 54 kDa subunit of the SRP. The polypeptide is Signal recognition particle 19 kDa protein (Methanococcus maripaludis (strain DSM 14266 / JCM 13030 / NBRC 101832 / S2 / LL)).